Here is a 534-residue protein sequence, read N- to C-terminus: Serine protease vicPb (534 aa).

The N-terminal stretch at 1–17 (MLRYLLIPILYLQVVLG) is a signal peptide. 3 N-linked (GlcNAc...) asparagine glycosylation sites follow: asparagine 34, asparagine 65, and asparagine 126. Residue serine 174 is the Charge relay system of the active site. N-linked (GlcNAc...) asparagine glycosylation is found at asparagine 297, asparagine 335, asparagine 352, asparagine 415, and asparagine 437. The Charge relay system role is filled by aspartate 451.

It belongs to the peptidase S28 family.

It functions in the pathway mycotoxin biosynthesis. In terms of biological role, serine protease, part of the gene cluster that mediates the biosynthesis of the secondary metabolite victorin, the molecular basis for Victoria blight of oats. Within the pathway, vicPa and vicPb are probably involved in the processing of the vicA1 and vicA2 precursors. The pathway starts with the processing of the precursor vicA1 by several endopeptidases including kexin proteases as well as the cluster-specific S28 family peptidases vicPa and vicPb to produce 7 identical copies of the hexapeptide Gly-Leu-Lys-Leu-Ala-Phe. After being excised from the precursor peptide, the core peptides are cyclized and modified post-translationally by enzymes encoded within the gene cluster. The ustYa family oxidase vicYb is required for the formation of the macrocycle in victorin and the copper amine oxidases (CAOs) vicK1 and vicK2 are responsible for converting victorin to the active form by oxidizing the N-terminal glycyl residue in the peptides to glyoxylate. Relaxed substrate specificity of enzymes in the victorin biosynthetic pathway results in a metabolic grid that produces a set of analogs including victorinines B, C, E or HV-toxin M. The polypeptide is Serine protease vicPb (Bipolaris victoriae (strain FI3) (Victoria blight of oats agent)).